The chain runs to 233 residues: Small ribosomal subunit protein uS2 (233 aa).

The protein belongs to the universal ribosomal protein uS2 family.

This chain is Small ribosomal subunit protein uS2, found in Clostridium perfringens (strain ATCC 13124 / DSM 756 / JCM 1290 / NCIMB 6125 / NCTC 8237 / Type A).